The primary structure comprises 502 residues: ATP synthase subunit alpha (502 aa).

Residue 169-176 participates in ATP binding; it reads GDKQTGKT.

Belongs to the ATPase alpha/beta chains family. In terms of assembly, F-type ATPases have 2 components, CF(1) - the catalytic core - and CF(0) - the membrane proton channel. CF(1) has five subunits: alpha(3), beta(3), gamma(1), delta(1), epsilon(1). CF(0) has three main subunits: a(1), b(2) and c(9-12). The alpha and beta chains form an alternating ring which encloses part of the gamma chain. CF(1) is attached to CF(0) by a central stalk formed by the gamma and epsilon chains, while a peripheral stalk is formed by the delta and b chains.

It localises to the cell membrane. It catalyses the reaction ATP + H2O + 4 H(+)(in) = ADP + phosphate + 5 H(+)(out). In terms of biological role, produces ATP from ADP in the presence of a proton gradient across the membrane. The alpha chain is a regulatory subunit. This is ATP synthase subunit alpha from Lachnoclostridium phytofermentans (strain ATCC 700394 / DSM 18823 / ISDg) (Clostridium phytofermentans).